Reading from the N-terminus, the 176-residue chain is Cathelicidin-2 (176 aa).

A signal peptide spans 1–29; the sequence is METQGASLSLGRWSLWLLLLGLVLPSASA. Pyrrolidone carboxylic acid is present on Gln-30. Positions 30–130 are excised as a propeptide; it reads QALSYREAVL…DINCNELQSV (101 aa). 2 disulfides stabilise this stretch: Cys-85-Cys-96 and Cys-107-Cys-124. The interval 135–176 is disordered; that stretch reads PIRRPPIRPPFRPPFRPPVRPPIRPPFRPPFRPPIGPFPGRR. A compositionally biased stretch (pro residues) spans 141–176; the sequence is IRPPFRPPFRPPVRPPIRPPFRPPFRPPIGPFPGRR. The residue at position 173 (Pro-173) is a Proline amide. Residues 174-176 constitute a propeptide, removed in mature form; it reads GRR.

The protein belongs to the cathelicidin family. Post-translationally, elastase is responsible for its maturation.

It localises to the secreted. In terms of biological role, binds to the lipid A moiety of bacterial lipipolysaccharides (LPS), a glycolipid present in the outer membrane of all Gram-negative bacteria. Potent antimicrobial activity. The protein is Cathelicidin-2 (CATHL2) of Ovis aries (Sheep).